The chain runs to 139 residues: Small ribosomal subunit protein eS6 (139 aa).

This sequence belongs to the eukaryotic ribosomal protein eS6 family.

This chain is Small ribosomal subunit protein eS6, found in Methanosarcina barkeri (strain Fusaro / DSM 804).